Reading from the N-terminus, the 342-residue chain is Phosphate acyltransferase (342 aa).

The protein belongs to the PlsX family. Homodimer. Probably interacts with PlsY.

Its subcellular location is the cytoplasm. The catalysed reaction is a fatty acyl-[ACP] + phosphate = an acyl phosphate + holo-[ACP]. Its pathway is lipid metabolism; phospholipid metabolism. Functionally, catalyzes the reversible formation of acyl-phosphate (acyl-PO(4)) from acyl-[acyl-carrier-protein] (acyl-ACP). This enzyme utilizes acyl-ACP as fatty acyl donor, but not acyl-CoA. This chain is Phosphate acyltransferase, found in Shewanella halifaxensis (strain HAW-EB4).